A 134-amino-acid chain; its full sequence is Translation initiation factor 5A (134 aa).

Hypusine is present on Lys36.

This sequence belongs to the eIF-5A family.

It is found in the cytoplasm. Functions by promoting the formation of the first peptide bond. This is Translation initiation factor 5A (eIF5A) from Korarchaeum cryptofilum (strain OPF8).